Reading from the N-terminus, the 206-residue chain is Cytochrome c biogenesis ATP-binding export protein CcmA (206 aa).

In terms of domain architecture, ABC transporter spans 4–205 (LEGIDLTCIR…AGAAIQRLQL (202 aa)). 36–43 (GPNGSGKT) is an ATP binding site.

It belongs to the ABC transporter superfamily. CcmA exporter (TC 3.A.1.107) family. In terms of assembly, the complex is composed of two ATP-binding proteins (CcmA) and two transmembrane proteins (CcmB).

It localises to the cell inner membrane. It carries out the reaction heme b(in) + ATP + H2O = heme b(out) + ADP + phosphate + H(+). Functionally, part of the ABC transporter complex CcmAB involved in the biogenesis of c-type cytochromes; once thought to export heme, this seems not to be the case, but its exact role is uncertain. Responsible for energy coupling to the transport system. This Nitrosospira multiformis (strain ATCC 25196 / NCIMB 11849 / C 71) protein is Cytochrome c biogenesis ATP-binding export protein CcmA.